The primary structure comprises 418 residues: Gamma-glutamyl phosphate reductase (418 aa).

Belongs to the gamma-glutamyl phosphate reductase family.

It localises to the cytoplasm. The catalysed reaction is L-glutamate 5-semialdehyde + phosphate + NADP(+) = L-glutamyl 5-phosphate + NADPH + H(+). Its pathway is amino-acid biosynthesis; L-proline biosynthesis; L-glutamate 5-semialdehyde from L-glutamate: step 2/2. Its function is as follows. Catalyzes the NADPH-dependent reduction of L-glutamate 5-phosphate into L-glutamate 5-semialdehyde and phosphate. The product spontaneously undergoes cyclization to form 1-pyrroline-5-carboxylate. In Citrifermentans bemidjiense (strain ATCC BAA-1014 / DSM 16622 / JCM 12645 / Bem) (Geobacter bemidjiensis), this protein is Gamma-glutamyl phosphate reductase.